Consider the following 1203-residue polypeptide: Regulator of telomere elongation helicase 1 (1203 aa).

The Helicase ATP-binding domain maps to 7-296; sequence NGVTVDFPFQ…ARVTQQGELQ (290 aa). 42–49 contributes to the ATP binding site; it reads SPTGTGKT. [4Fe-4S] cluster contacts are provided by C145, C163, C172, and C207. A Nuclear localization signal motif is present at residues 151–167; that stretch reads KKQESNHMQISLCRKKV. The DEAH box signature appears at 250–253; sequence DEAH. Residues 871 to 877 carry the Nuclear localization signal motif; sequence QKGGRKK. Disordered regions lie at residues 998-1020 and 1120-1203; these read QLDP…TSKG and TTGK…RSKQ. Basic and acidic residues predominate over residues 1123–1134; it reads KDLELEGPRDES. The short motif at 1160–1167 is the PIP-box element; the sequence is QSKISSFF. Residues 1169-1181 show a composition bias toward basic and acidic residues; it reads QRPDESVRSDDTT.

The protein belongs to the helicase family. RAD3/XPD subfamily. As to quaternary structure, interacts with TERF1. Interacts (via PIP-box) with PCNA; the interaction is direct and essential for suppressing telomere fragility. Interacts with MMS19; the interaction mediates the association of RTEL1 with the cytosolic iron-sulfur protein assembly (CIA) complex.

The protein resides in the nucleus. The enzyme catalyses ATP + H2O = ADP + phosphate + H(+). In terms of biological role, a probable ATP-dependent DNA helicase implicated in telomere-length regulation, DNA repair and the maintenance of genomic stability. Acts as an anti-recombinase to counteract toxic recombination and limit crossover during meiosis. Regulates meiotic recombination and crossover homeostasis by physically dissociating strand invasion events and thereby promotes noncrossover repair by meiotic synthesis dependent strand annealing (SDSA) as well as disassembly of D loop recombination intermediates. Also disassembles T loops and prevents telomere fragility by counteracting telomeric G4-DNA structures, which together ensure the dynamics and stability of the telomere. This Mus spretus (Western Mediterranean mouse) protein is Regulator of telomere elongation helicase 1 (Rtel1).